The following is a 546-amino-acid chain: Cytochrome P450 monooxygenase alnH (546 aa).

The chain crosses the membrane as a helical span at residues 11-31; it reads VPYSVPLLGSTVVILIGFIAI. N-linked (GlcNAc...) asparagine glycans are attached at residues Asn-146, Asn-258, and Asn-425. Cys-445 lines the heme pocket.

It belongs to the cytochrome P450 family. It depends on heme as a cofactor.

It is found in the membrane. It participates in polyketide biosynthesis. Its function is as follows. Cytochrome P450 monooxygenase; part of the gene cluster that mediates the biosynthesis of asperlin, a polyketide showing anti-inflammatory, antitumor and antibiotic activities. The first step of the asperlin biosynthesis is the production of the intermediate 2,4,6-octatrienoic acid by the highly redusing polyketide synthase alnA with cleavage of the PKS product by the esterase alnB. 2,4,6-octatrienoic acid is further converted to asperlin via several steps involving the remaining enzymes from the cluster. The protein is Cytochrome P450 monooxygenase alnH of Emericella nidulans (strain FGSC A4 / ATCC 38163 / CBS 112.46 / NRRL 194 / M139) (Aspergillus nidulans).